We begin with the raw amino-acid sequence, 2189 residues long: Chromatin modification-related protein eaf-1 (2189 aa).

Disordered stretches follow at residues 183 to 400 (VQGS…SGAE), 415 to 438 (VIGK…TQHP), and 477 to 601 (EVAK…PPGL). Residues 234–253 (PTPQTVAPPATAPTSTTKTA) are compositionally biased toward low complexity. The segment covering 260 to 277 (AGPKDDTVSRGDAEEKAR) has biased composition (basic and acidic residues). Composition is skewed to polar residues over residues 281–293 (TITS…SNGD), 300–312 (TLSS…QSAP), and 319–333 (ASAS…SQSF). Residues 336 to 349 (PVSRPEQELRRATT) show a composition bias toward basic and acidic residues. Positions 534–543 (QPQPSSTAPS) are enriched in low complexity. The span at 573-583 (ETQARTSQSSH) shows a compositional bias: polar residues. One can recognise an HSA domain in the interval 722–797 (PVRCLEPARP…PPVRAVDNAD (76 aa)). The 61-residue stretch at 985 to 1045 (FESRIASQWT…ECFERWVNLE (61 aa)) folds into the Myb-like domain. 2 stretches are compositionally biased toward low complexity: residues 1320 to 1330 (VAVQLQQQQHQ) and 1336 to 1406 (QHPQ…QVTQ). 4 disordered regions span residues 1320–1428 (VAVQ…PMRP), 1622–1644 (MQTQ…QAQA), 1663–1831 (QKQA…GQVQ), and 1846–2189 (VQGQ…APTK). 5 stretches are compositionally biased toward low complexity: residues 1663–1808 (QKQA…QGQG), 1818–1831 (GQGH…GQVQ), 1846–1863 (VQGQ…PQHA), 1873–2089 (QHAQ…QPQQ), and 2097–2189 (SQPQ…APTK).

The protein belongs to the EAF1 family. As to quaternary structure, component of the NuA4 histone acetyltransferase complex.

Its subcellular location is the nucleus. Component of the NuA4 histone acetyltransferase complex which is involved in transcriptional activation of selected genes principally by acetylation of nucleosomal histone H4 and H2A. The NuA4 complex is also involved in DNA repair. This chain is Chromatin modification-related protein eaf-1 (eaf-1), found in Neurospora crassa (strain ATCC 24698 / 74-OR23-1A / CBS 708.71 / DSM 1257 / FGSC 987).